Here is a 178-residue protein sequence, read N- to C-terminus: MSRIGKKPVAIPSGVTINVAAGNQVEVKSTKATLNKTFSSDVTFNIEDGVVTVTPKNNSKNAIAQSGTARAILNNMVEGVSKGFERKLKIIGVGYRAKAQGSELNLTLGFSHPVVYKLPQGITAETPAPTEIILKGADKEVLGKVASEIREYRKPEPYKGKGVRYEDEYVAKKEAKKK.

This sequence belongs to the universal ribosomal protein uL6 family. As to quaternary structure, part of the 50S ribosomal subunit.

Functionally, this protein binds to the 23S rRNA, and is important in its secondary structure. It is located near the subunit interface in the base of the L7/L12 stalk, and near the tRNA binding site of the peptidyltransferase center. The chain is Large ribosomal subunit protein uL6 from Francisella philomiragia subsp. philomiragia (strain ATCC 25017 / CCUG 19701 / FSC 153 / O#319-036).